Here is a 337-residue protein sequence, read N- to C-terminus: Tryptophan--tRNA ligase (337 aa).

Residues 12–14 (QPS) and 21–22 (GN) contribute to the ATP site. Residues 13-22 (PSADSLHLGN) carry the 'HIGH' region motif. Asp-138 is a binding site for L-tryptophan. Residues 150–152 (GDD), Ile-189, and 198–202 (KMSKS) each bind ATP. Positions 198 to 202 (KMSKS) match the 'KMSKS' region motif.

This sequence belongs to the class-I aminoacyl-tRNA synthetase family. In terms of assembly, homodimer.

It is found in the cytoplasm. The catalysed reaction is tRNA(Trp) + L-tryptophan + ATP = L-tryptophyl-tRNA(Trp) + AMP + diphosphate + H(+). Catalyzes the attachment of tryptophan to tRNA(Trp). This Leifsonia xyli subsp. xyli (strain CTCB07) protein is Tryptophan--tRNA ligase.